Reading from the N-terminus, the 245-residue chain is Carboxy-S-adenosyl-L-methionine synthase (245 aa).

Residues Tyr-42, Gly-67–Ser-69, Asp-92–Asn-93, Asp-120–Ile-121, Asn-135, and Arg-202 each bind S-adenosyl-L-methionine.

The protein belongs to the class I-like SAM-binding methyltransferase superfamily. Cx-SAM synthase family. In terms of assembly, homodimer.

The enzyme catalyses prephenate + S-adenosyl-L-methionine = carboxy-S-adenosyl-L-methionine + 3-phenylpyruvate + H2O. Catalyzes the conversion of S-adenosyl-L-methionine (SAM) to carboxy-S-adenosyl-L-methionine (Cx-SAM). The chain is Carboxy-S-adenosyl-L-methionine synthase from Vibrio campbellii (strain ATCC BAA-1116).